The sequence spans 404 residues: Probable tRNA sulfurtransferase (404 aa).

One can recognise a THUMP domain in the interval 60–165 (QPIVEALKLV…DEAAYISYEE (106 aa)). ATP is bound by residues 183 to 184 (ML), 208 to 209 (HF), arginine 265, glycine 287, and glutamine 296.

The protein belongs to the ThiI family.

The protein localises to the cytoplasm. It catalyses the reaction [ThiI sulfur-carrier protein]-S-sulfanyl-L-cysteine + a uridine in tRNA + 2 reduced [2Fe-2S]-[ferredoxin] + ATP + H(+) = [ThiI sulfur-carrier protein]-L-cysteine + a 4-thiouridine in tRNA + 2 oxidized [2Fe-2S]-[ferredoxin] + AMP + diphosphate. It carries out the reaction [ThiS sulfur-carrier protein]-C-terminal Gly-Gly-AMP + S-sulfanyl-L-cysteinyl-[cysteine desulfurase] + AH2 = [ThiS sulfur-carrier protein]-C-terminal-Gly-aminoethanethioate + L-cysteinyl-[cysteine desulfurase] + A + AMP + 2 H(+). It functions in the pathway cofactor biosynthesis; thiamine diphosphate biosynthesis. Its function is as follows. Catalyzes the ATP-dependent transfer of a sulfur to tRNA to produce 4-thiouridine in position 8 of tRNAs, which functions as a near-UV photosensor. Also catalyzes the transfer of sulfur to the sulfur carrier protein ThiS, forming ThiS-thiocarboxylate. This is a step in the synthesis of thiazole, in the thiamine biosynthesis pathway. The sulfur is donated as persulfide by IscS. The protein is Probable tRNA sulfurtransferase of Streptococcus pyogenes serotype M3 (strain ATCC BAA-595 / MGAS315).